The chain runs to 407 residues: Glycolate oxidase iron-sulfur subunit (407 aa).

4Fe-4S ferredoxin-type domains lie at Arg14 to Gly47 and Leu66 to Leu95. [4Fe-4S] cluster-binding residues include Cys25, Cys28, Cys31, Cys35, Cys75, Cys78, Cys81, and Cys85.

As to quaternary structure, the glycolate oxidase likely consists of three subunits, GlcD, GlcE and GlcF. It depends on [4Fe-4S] cluster as a cofactor.

Its subcellular location is the cell inner membrane. It catalyses the reaction glycolate + A = glyoxylate + AH2. The enzyme catalyses (R)-lactate + A = pyruvate + AH2. With respect to regulation, in vitro the glycolate oxidase activity is inhibited by the sulfhydryl inhibitors CuSO4 and PCMB, by KCN, but not by the metal complexing agent EDTA. In terms of biological role, component of a complex that catalyzes the oxidation of glycolate to glyoxylate. Is required for E.coli to grow on glycolate as a sole source of carbon. Is also able to oxidize D-lactate ((R)-lactate) with a similar rate. Does not link directly to O(2), and 2,6-dichloroindophenol (DCIP) and phenazine methosulfate (PMS) can act as artificial electron acceptors in vitro, but the physiological molecule that functions as a primary electron acceptor during glycolate oxidation is unknown. The protein is Glycolate oxidase iron-sulfur subunit of Escherichia coli (strain K12).